A 294-amino-acid polypeptide reads, in one-letter code: Peroxidase-like protein 3 (294 aa).

Asparagine 129 carries N-linked (GlcNAc...) asparagine glycosylation.

It belongs to the peroxidase family. In terms of tissue distribution, component of the acid-insoluble and acid-soluble organic matrix of calcified layers of the shell (at protein level).

It localises to the secreted. This is Peroxidase-like protein 3 from Lottia gigantea (Giant owl limpet).